A 61-amino-acid polypeptide reads, in one-letter code: Probable tautomerase spyM18_1099 (61 aa).

Pro-2 acts as the Proton acceptor; via imino nitrogen in catalysis.

Belongs to the 4-oxalocrotonate tautomerase family.

The chain is Probable tautomerase spyM18_1099 from Streptococcus pyogenes serotype M18 (strain MGAS8232).